The primary structure comprises 226 residues: uncharacterized protein (226 aa).

The HTH cro/C1-type domain occupies 168–226; it reads ISALRNKLGLTQTDLGKRINVDANVIRNIETGDLVAFNVQDPMVRSLAYALGIRTIKYQ. Residues 179–198 constitute a DNA-binding region (H-T-H motif); the sequence is QTDLGKRINVDANVIRNIET.

This is an uncharacterized protein from Acanthamoeba polyphaga mimivirus (APMV).